A 347-amino-acid chain; its full sequence is MKQVQVAVVGASGYTGQELLRILLNHRGVKLVCATSRQYAGQPLWEVFPRFRQVPGSGLKFTDSDVEAIAATGAEVAFLALPHGVAASYARGLVDRGVRVIDLSADFRLDSPDVYEEYYGNPHPDTALMQEAVYGLPEWRREEIARARIVASPGCYPTSILLPLIPLFRAGMLEPEDVVACSGSGVSGAGRKASIPLLFCECNESFHAYGVPKHRHLSEIEQELSHAAGETVVMSFTPHLIPVNTGICSTITAKVKKGADPESVGRLLEEAYAAAPFVRLLGRNQPADTKNVTRTNCVDIGWAYDPRTNRVILMSAEDNVVKGAGGQAVQSFNIMCGFDETEGLWVL.

The active site involves Cys155.

It belongs to the NAGSA dehydrogenase family. Type 1 subfamily.

The protein localises to the cytoplasm. It catalyses the reaction N-acetyl-L-glutamate 5-semialdehyde + phosphate + NADP(+) = N-acetyl-L-glutamyl 5-phosphate + NADPH + H(+). It participates in amino-acid biosynthesis; L-arginine biosynthesis; N(2)-acetyl-L-ornithine from L-glutamate: step 3/4. Its function is as follows. Catalyzes the NADPH-dependent reduction of N-acetyl-5-glutamyl phosphate to yield N-acetyl-L-glutamate 5-semialdehyde. The polypeptide is N-acetyl-gamma-glutamyl-phosphate reductase (Akkermansia muciniphila (strain ATCC BAA-835 / DSM 22959 / JCM 33894 / BCRC 81048 / CCUG 64013 / CIP 107961 / Muc)).